Reading from the N-terminus, the 1300-residue chain is Sal-like protein 3 (1300 aa).

Positions 1–11 (MSRRKQAKPQH) are enriched in basic residues. Disordered regions lie at residues 1–51 (MSRR…EETS), 84–162 (EDAP…YGAP), 234–258 (QRPP…PSQL), and 277–352 (GSGP…GSLL). Residues 51–73 (SVCEKCCAEFFKWADFLEHQRSC) form a C2H2-type 1; atypical zinc finger. Over residues 87 to 100 (PAPPPEDFPEPSPA) the composition is skewed to pro residues. Position 109 is a phosphoserine (Ser-109). The span at 122–132 (GEARPVEKEAE) shows a compositional bias: basic and acidic residues. Residues 145 to 157 (PRPPPAAPAPPTP) are compositionally biased toward pro residues. Low complexity-rich tracts occupy residues 277 to 319 (GSGP…AAPA) and 329 to 352 (PQSA…GSLL). 2 consecutive C2H2-type zinc fingers follow at residues 420–442 (HKCR…LRSH) and 448–470 (FKCN…FQRH). Residues 523 to 633 (PTSVGLQLPP…VDGAPTSLGS (111 aa)) form a disordered region. The span at 543–561 (SPSATPASRSPQRPSPASS) shows a compositional bias: low complexity. The span at 577-586 (VSATAESPQS) shows a compositional bias: polar residues. C2H2-type zinc fingers lie at residues 679–701 (NQCV…YRTH), 707–729 (FKCK…FGVH), and 739–761 (HSCP…IRMH). The segment at 864-955 (SVENGSGESD…GSGGAPGRAG (92 aa)) is disordered. Over residues 889–910 (RSAGSPALSESSSSQALSPAPS) the composition is skewed to low complexity. Phosphoserine is present on Ser-919. C2H2-type zinc fingers lie at residues 977–999 (TVCG…YRSH), 1005–1027 (FVCA…LLTH), 1113–1135 (HNCQ…ERTH), and 1141–1163 (FGCT…MGTH). The residue at position 1177 (Ser-1177) is a Phosphoserine. The tract at residues 1259–1279 (GMDKARTGSSPPIVSLDKASS) is disordered.

This sequence belongs to the sal C2H2-type zinc-finger protein family. As to expression, widely expressed in adult with highest levels in heart. Expressed in fetal brain (in neurons of hippocampus, cortex, mediodorsal and ventrolateral thalamic nuclei, putamen, cerebellum and brainstem).

The protein resides in the nucleus. In terms of biological role, probable transcription factor. The chain is Sal-like protein 3 (SALL3) from Homo sapiens (Human).